Here is a 999-residue protein sequence, read N- to C-terminus: Disks large-associated protein 1 (999 aa).

Disordered stretches follow at residues 155-213 (HSLE…GYWS), 395-418 (MAED…ARRA), and 918-989 (NWRP…DSIE). A compositionally biased stretch (basic and acidic residues) spans 194–204 (RERCKSAEPKN). Composition is skewed to basic and acidic residues over residues 923–932 (DPPERKERRL) and 947–965 (LARD…EARK). Polar residues predominate over residues 976-985 (VRQNSATESA). Positions 997-999 (TRL) match the PDZ-binding motif.

Belongs to the SAPAP family.

The protein localises to the cell membrane. The protein resides in the postsynaptic density. It localises to the synapse. In terms of biological role, part of the postsynaptic scaffold in neuronal cells. The polypeptide is Disks large-associated protein 1 (Danio rerio (Zebrafish)).